The chain runs to 160 residues: Transcription antitermination protein NusB (160 aa).

It belongs to the NusB family.

Involved in transcription antitermination. Required for transcription of ribosomal RNA (rRNA) genes. Binds specifically to the boxA antiterminator sequence of the ribosomal RNA (rrn) operons. This is Transcription antitermination protein NusB from Maricaulis maris (strain MCS10) (Caulobacter maris).